We begin with the raw amino-acid sequence, 143 residues long: Sec-independent protein translocase protein TatB (143 aa).

The chain crosses the membrane as a helical span at residues 2-22; it reads FGNIGWGEFMVLLVAALVILG. Residues 97-143 are disordered; sequence FDKPGSVSFDKSNPGTKAVSADPSTPTAPQNKPLAAGERPPIDLDAT.

This sequence belongs to the TatB family. In terms of assembly, the Tat system comprises two distinct complexes: a TatABC complex, containing multiple copies of TatA, TatB and TatC subunits, and a separate TatA complex, containing only TatA subunits. Substrates initially bind to the TatABC complex, which probably triggers association of the separate TatA complex to form the active translocon.

The protein localises to the cell membrane. Functionally, part of the twin-arginine translocation (Tat) system that transports large folded proteins containing a characteristic twin-arginine motif in their signal peptide across membranes. Together with TatC, TatB is part of a receptor directly interacting with Tat signal peptides. TatB may form an oligomeric binding site that transiently accommodates folded Tat precursor proteins before their translocation. This is Sec-independent protein translocase protein TatB from Rhodococcus opacus (strain B4).